The following is a 336-amino-acid chain: Anthranilate phosphoribosyltransferase (336 aa).

5-phospho-alpha-D-ribose 1-diphosphate-binding positions include Gly-82, Gly-85–Asp-86, Thr-90, Asn-92–Thr-95, Lys-110–Ser-118, and Ser-122. Gly-82 serves as a coordination point for anthranilate. Mg(2+) is bound at residue Ser-94. Anthranilate is bound at residue Asn-113. Residue Arg-168 participates in anthranilate binding. Mg(2+) contacts are provided by Asp-227 and Glu-228.

Belongs to the anthranilate phosphoribosyltransferase family. Homodimer. It depends on Mg(2+) as a cofactor.

It carries out the reaction N-(5-phospho-beta-D-ribosyl)anthranilate + diphosphate = 5-phospho-alpha-D-ribose 1-diphosphate + anthranilate. It participates in amino-acid biosynthesis; L-tryptophan biosynthesis; L-tryptophan from chorismate: step 2/5. Its function is as follows. Catalyzes the transfer of the phosphoribosyl group of 5-phosphorylribose-1-pyrophosphate (PRPP) to anthranilate to yield N-(5'-phosphoribosyl)-anthranilate (PRA). The chain is Anthranilate phosphoribosyltransferase from Leptospira borgpetersenii serovar Hardjo-bovis (strain JB197).